The following is a 521-amino-acid chain: Lipid-translocating exporter-like protein RTA1 (521 aa).

7 helical membrane passes run 186-206 (GAPI…SWQC), 211-231 (AWKL…GYAL), 249-269 (LALF…LELA), 292-312 (VTAF…SGVS), 332-352 (LVAL…SVLF), 371-391 (TLMT…FRLV), and 418-438 (EAYF…LWNV). The interval 493 to 521 (THSQPQELYENPNGNGHKKFRLGNGGRAT) is disordered.

This sequence belongs to the lipid-translocating exporter (LTE) (TC 9.A.26.1) family.

It is found in the membrane. In terms of biological role, lipid-translocating exporter-like protein; part of the gene cluster that mediates the biosynthesis of phomenoic acid, a long chain aliphatic carboxylic acid that does not appear to be essential for pathogenicity but may play a role in allowing to outcompete other fungi in the environmental niche via its antifungal properties. The sequence is that of Lipid-translocating exporter-like protein RTA1 from Leptosphaeria maculans (strain JN3 / isolate v23.1.3 / race Av1-4-5-6-7-8) (Blackleg fungus).